The sequence spans 176 residues: MTNIRKSHPLIKIVNDAFIDLPAPSNISSWWNFGSLLGVCLIVQILTGLFLAMHYTSDTATAFNSVTHICRDVNYGWLLRYLHANGASMFFICLYLHIGRGLYYGSYTYTETWNVGVILLFAVMATAFMGYVLPWGQMSFWGATVITNLLSAIPYIGTELVQWIWGGLSVDKATLT.

3 consecutive transmembrane segments (helical) span residues 33–53 (FGSLLGVCLIVQILTGLFLAM), 77–98 (WLLRYLHANGASMFFICLYLHI), and 113–133 (WNVGVILLFAVMATAFMGYVL). 2 residues coordinate heme b: His83 and His97.

This sequence belongs to the cytochrome b family. The cytochrome bc1 complex contains 11 subunits: 3 respiratory subunits (MT-CYB, CYC1 and UQCRFS1), 2 core proteins (UQCRC1 and UQCRC2) and 6 low-molecular weight proteins (UQCRH/QCR6, UQCRB/QCR7, UQCRQ/QCR8, UQCR10/QCR9, UQCR11/QCR10 and a cleavage product of UQCRFS1). This cytochrome bc1 complex then forms a dimer. The cofactor is heme b.

The protein resides in the mitochondrion inner membrane. Component of the ubiquinol-cytochrome c reductase complex (complex III or cytochrome b-c1 complex) that is part of the mitochondrial respiratory chain. The b-c1 complex mediates electron transfer from ubiquinol to cytochrome c. Contributes to the generation of a proton gradient across the mitochondrial membrane that is then used for ATP synthesis. The sequence is that of Cytochrome b (MT-CYB) from Nyctinomops aurispinosus (Peale's free-tailed bat).